We begin with the raw amino-acid sequence, 530 residues long: MNNARPIRRALISVSDKTGIVEFAQALANRGVDILSTGGTARLLAEKGISVTEVSDYTGFPEMMDGRVKTLHPKVHGGVLGRRGQDDDVMETHGINPIDMVVVNLYPFAETVAKEGCTLADAVENIDIGGPTMVRSAAKNHKDVTIVVNAHDYERVVAEMDANEKSLTLETRFDLAIAAFEHTASYDGMIANYFGTMVPSYGENKEGDEESKFPRTFNQQFEKKQDMRYGENSHQAAAFYVEANPEEASVSTARQIQGKALSYNNIADTDAALECVKEFDEPACVIVKHANPCGVALGEDILEAYDRAFKTDPTSAFGGIIAFNRELDAATATAITERQFVEVIIAPSVSAEAVAIVAAKKNLRLLECGEWTTKTTGFDVKRVNGGLLVQDRDQGMVSEDDLKVVSKRQPTAEELKDALFCWKVAKYVKSNAIVYSKGDMTIGVGAGQMSRVYSAKIAGIKAADEGLQVEGCVMASDAFFPFRDGIDAAAEAGIKCVIQPGGSMRDDEVIAAADEHGMAMIFTGMRHFRH.

The region spanning 1–148 (MNNARPIRRA…KNHKDVTIVV (148 aa)) is the MGS-like domain.

This sequence belongs to the PurH family.

The catalysed reaction is (6R)-10-formyltetrahydrofolate + 5-amino-1-(5-phospho-beta-D-ribosyl)imidazole-4-carboxamide = 5-formamido-1-(5-phospho-D-ribosyl)imidazole-4-carboxamide + (6S)-5,6,7,8-tetrahydrofolate. It carries out the reaction IMP + H2O = 5-formamido-1-(5-phospho-D-ribosyl)imidazole-4-carboxamide. The protein operates within purine metabolism; IMP biosynthesis via de novo pathway; 5-formamido-1-(5-phospho-D-ribosyl)imidazole-4-carboxamide from 5-amino-1-(5-phospho-D-ribosyl)imidazole-4-carboxamide (10-formyl THF route): step 1/1. Its pathway is purine metabolism; IMP biosynthesis via de novo pathway; IMP from 5-formamido-1-(5-phospho-D-ribosyl)imidazole-4-carboxamide: step 1/1. The polypeptide is Bifunctional purine biosynthesis protein PurH (Vibrio atlanticus (strain LGP32) (Vibrio splendidus (strain Mel32))).